A 619-amino-acid chain; its full sequence is tRNA uridine 5-carboxymethylaminomethyl modification enzyme MnmG (619 aa).

FAD is bound by residues 14 to 19 (GAGHAG), Val126, and Ser181. 273–287 (GPRYCPSIEDKIMRF) serves as a coordination point for NAD(+). Gln370 provides a ligand contact to FAD.

This sequence belongs to the MnmG family. In terms of assembly, homodimer. Heterotetramer of two MnmE and two MnmG subunits. The cofactor is FAD.

It localises to the cytoplasm. Functionally, NAD-binding protein involved in the addition of a carboxymethylaminomethyl (cmnm) group at the wobble position (U34) of certain tRNAs, forming tRNA-cmnm(5)s(2)U34. This chain is tRNA uridine 5-carboxymethylaminomethyl modification enzyme MnmG, found in Syntrophotalea carbinolica (strain DSM 2380 / NBRC 103641 / GraBd1) (Pelobacter carbinolicus).